Here is a 707-residue protein sequence, read N- to C-terminus: MFKVFRKEMMWGGRKLVLETGKVARQADGAVWASYGDTVVLATAVAAKAPKPGVDFFPLTVNYQEKAFAAGKIPGGFFKREGRPTEKEVLTSRLIDRPIRPLFADGYRNETQVIVTVLSHDLENDPDIVAMVATSAALTISGIPFLGPIGAARVGYKDGQFVLNPTLEQVEASDLDLVVAGTTEGVLMVESEAKELPEDVMLGAVMFGHREFQPVIDLIIDLAEMAAKDPMAIPAPAYDKDAVKTRMAALIGQDVRQAYTLTVKQERYAAIGAAKLKALETMVAEGTAPEAVASVFKELESDILRGSVIETGKRIDGRTTVDIRPIVSQVGVLPRAHGSALFTRGETQALVVATLGTNQDEQIVDALEGEYRESFMLHYNFPPYSVGEAGRMGSPGRREIGHGKLAWRAVRPLLPTKETFPYTIRVVSEITESNGSSSMATVCGSSLSMMDAGVPLPRPVAGIAMGLIKEGEKFAVLSDILGDEDHLGDMDFKVAGTEKGVTALQMDIKITSITEEIMKIALAQAKDGRVHILSEMNKALNTAREAVNQNAPRITVINIPKDKIRDVIGSGGKVIREIVEQTGAKIDIEDDGTVKVAAVDGKASEAAIKWIKGIVAEPEVGEIYEGKVVKIMDFGAFVNFLGSRDGLVHISELKNERVAKVTDVVKQGDAVKVKVLGFDDRGKVKLSMKVVDQTTGEDLSKKEEAEG.

Residues D485 and D491 each coordinate Mg(2+). One can recognise a KH domain in the interval 552 to 615 (PRITVINIPK…AAIKWIKGIV (64 aa)). In terms of domain architecture, S1 motif spans 621–689 (GEIYEGKVVK…DRGKVKLSMK (69 aa)).

The protein belongs to the polyribonucleotide nucleotidyltransferase family. Mg(2+) is required as a cofactor.

The protein localises to the cytoplasm. The enzyme catalyses RNA(n+1) + phosphate = RNA(n) + a ribonucleoside 5'-diphosphate. Involved in mRNA degradation. Catalyzes the phosphorolysis of single-stranded polyribonucleotides processively in the 3'- to 5'-direction. The protein is Polyribonucleotide nucleotidyltransferase of Rhodospirillum centenum (strain ATCC 51521 / SW).